A 98-amino-acid polypeptide reads, in one-letter code: Small ribosomal subunit protein bS20 (98 aa).

The segment covering Met1–Arg15 has biased composition (basic residues). Residues Met1 to Arg21 form a disordered region.

It belongs to the bacterial ribosomal protein bS20 family.

In terms of biological role, binds directly to 16S ribosomal RNA. The protein is Small ribosomal subunit protein bS20 of Chlamydia abortus (strain DSM 27085 / S26/3) (Chlamydophila abortus).